Reading from the N-terminus, the 218-residue chain is Nucleoid occlusion factor SlmA (218 aa).

The 61-residue stretch at 30–90 (ERRQQVLTVL…ALIEHIESTL (61 aa)) folds into the HTH tetR-type domain. The segment at residues 53-72 (TTARLAKEVGVSEAALYRYF) is a DNA-binding region (H-T-H motif).

This sequence belongs to the nucleoid occlusion factor SlmA family. Homodimer. Interacts with FtsZ.

It localises to the cytoplasm. Its subcellular location is the nucleoid. In terms of biological role, required for nucleoid occlusion (NO) phenomenon, which prevents Z-ring formation and cell division over the nucleoid. Acts as a DNA-associated cell division inhibitor that binds simultaneously chromosomal DNA and FtsZ, and disrupts the assembly of FtsZ polymers. SlmA-DNA-binding sequences (SBS) are dispersed on non-Ter regions of the chromosome, preventing FtsZ polymerization at these regions. This is Nucleoid occlusion factor SlmA from Haemophilus influenzae (strain PittGG).